Here is a 161-residue protein sequence, read N- to C-terminus: Nucleotide-binding protein Shew_2893 (161 aa).

Belongs to the YajQ family.

Its function is as follows. Nucleotide-binding protein. The protein is Nucleotide-binding protein Shew_2893 of Shewanella loihica (strain ATCC BAA-1088 / PV-4).